A 483-amino-acid chain; its full sequence is Aspartyl/glutamyl-tRNA(Asn/Gln) amidotransferase subunit B (483 aa).

It belongs to the GatB/GatE family. GatB subfamily. Heterotrimer of A, B and C subunits.

The catalysed reaction is L-glutamyl-tRNA(Gln) + L-glutamine + ATP + H2O = L-glutaminyl-tRNA(Gln) + L-glutamate + ADP + phosphate + H(+). It catalyses the reaction L-aspartyl-tRNA(Asn) + L-glutamine + ATP + H2O = L-asparaginyl-tRNA(Asn) + L-glutamate + ADP + phosphate + 2 H(+). Allows the formation of correctly charged Asn-tRNA(Asn) or Gln-tRNA(Gln) through the transamidation of misacylated Asp-tRNA(Asn) or Glu-tRNA(Gln) in organisms which lack either or both of asparaginyl-tRNA or glutaminyl-tRNA synthetases. The reaction takes place in the presence of glutamine and ATP through an activated phospho-Asp-tRNA(Asn) or phospho-Glu-tRNA(Gln). The polypeptide is Aspartyl/glutamyl-tRNA(Asn/Gln) amidotransferase subunit B (Rickettsia rickettsii (strain Iowa)).